The sequence spans 88 residues: Large ribosomal subunit protein bL27 (88 aa).

The protein belongs to the bacterial ribosomal protein bL27 family.

This is Large ribosomal subunit protein bL27 from Parabacteroides distasonis (strain ATCC 8503 / DSM 20701 / CIP 104284 / JCM 5825 / NCTC 11152).